The sequence spans 2550 residues: Highly reducing polyketide synthase otaA (2550 aa).

The Ketosynthase family 3 (KS3) domain maps to 9–431 (SEPLAIIGLA…GTNAHAVVED (423 aa)). Catalysis depends on for beta-ketoacyl synthase activity residues C182, H317, and H355. Residues 572–894 (FVFTGQGANW…KRYETNGSTI (323 aa)) are malonyl-CoA:ACP transacylase (MAT) domain. An N-terminal hotdog fold region spans residues 959–1094 (HELLGVPVED…GSVRAETGPP (136 aa)). Residues 959–1252 (HELLGVPVED…DLVQLPANND (294 aa)) are dehydratase (DH) domain. Residues 959–1253 (HELLGVPVED…LVQLPANNDD (295 aa)) enclose the PKS/mFAS DH domain. The C-terminal hotdog fold stretch occupies residues 1107–1253 (AEPVDIAQMY…LVQLPANNDD (147 aa)). Positions 1420 and 1442 each coordinate S-adenosyl-L-methionine. A methyltransferase (CMeT) domain region spans residues 1433 to 1612 (HAQTGIKILE…GLRPRLIIND (180 aa)). Positions 1859–1919 (PDEVKIRIHA…DQVMALRTGP (61 aa)) are enoyl reductase (ER) (ER) domain. The tract at residues 2166–2345 (ASYLLIGGFG…PATSVSLGSV (180 aa)) is ketoreductase (KR) domain. The 78-residue stretch at 2454-2531 (AAVEVVTRAI…QLAQQAADAS (78 aa)) folds into the Carrier domain. S2491 is modified (O-(pantetheine 4'-phosphoryl)serine).

Pantetheine 4'-phosphate is required as a cofactor.

The enzyme catalyses 4 malonyl-CoA + acetyl-CoA + 5 NADPH + 9 H(+) = 7-methylmellein + 3 CO2 + 5 NADP(+) + 5 CoA + 4 H2O. The protein operates within mycotoxin biosynthesis. Functionally, highly reducing polyketide synthase; part of the gene cluster that mediates the biosynthesis of ochratoxin A (OTA), a mycotoxin composed of a chlorinated type I polyketide dihydroisocoumarin moiety linked to L-phenylalanine, and demonstrated to have nephrotoxic, immunotoxic, genotoxic, neurotoxic, and teratogenic properties. OtaA catalyzes the condensation of one acetate and 4 malonate units to form the isocoumarin group. The pathway begins with the highly reducing polyketide synthase otaA that catalyzes the formation of the isocoumarin group during the initial stages of biosynthesis, starting from one acetate and 4 malonate units, to originate the characteristic pentaketide skeleton 7-methylmellein (7-MM) of the OTA molecule. The newly identified cyclase otaY might be involved in the polyketide cyclization reaction during the initial steps of the OTA biosynthesis. 7-MM is then oxidized into 7-carboxymellein (also called ochratoxin beta) by the cytochrome P450 monooxygenase otaC. The NRPS encoded by the otaB gene is involved in the linking of phenylalanine to the dihydroisocoumarin ring. The reaction catalyzed by NRPS results in the production of ochratoxin B (OTB), which is the non-chlorinated analog of OTA and which subsequently serves as the substrate of the halogenase otaD for chlorination activity to form the final molecular structure of OTA, containing a chlorine atom in the C-5 position of the molecule. The polypeptide is Highly reducing polyketide synthase otaA (Aspergillus niger (strain ATCC MYA-4892 / CBS 513.88 / FGSC A1513)).